A 440-amino-acid chain; its full sequence is Protein EFFECTOR OF TRANSCRIPTION (440 aa).

Residues 131 to 167 (SIQGLGVAVNIHDADDISHGQTESIRTRLRSYGRPVP) enclose the GIY-YIG domain. The tract at residues 172 to 216 (LGDNASQTITQKKTGGRSKDKKHGFEEERDVSRVEAEENNTNSVH) is disordered. Residues 175-184 (NASQTITQKK) are compositionally biased toward polar residues. Residues 194 to 207 (HGFEEERDVSRVEA) are compositionally biased toward basic and acidic residues. Cx9Cx9RCx2HK repeat units lie at residues 247–272 (CGVL…TEHK) and 295–320 (CGVI…EDHK). Residues 339-363 (ILKEDKSKPKTRTSSTNQEEPGESL) form a disordered region. Cx9Cx9RCx2HK repeat units follow at residues 365 to 390 (CEAT…WQHK) and 409 to 434 (CGVK…QEHK).

It localises to the nucleus. Functionally, transcription regulator that negatively modulates gibberellin-mediated developmental processes. May act as transcriptional repressor of giberellin controlled genes. Binds DNA without sequence preference. This Brassica napus (Rape) protein is Protein EFFECTOR OF TRANSCRIPTION.